An 86-amino-acid chain; its full sequence is Apolipoprotein C-I (86 aa).

A signal peptide spans 1-26 (MRLFLSLPVLVVALLTILEGPGPAQG).

Belongs to the apolipoprotein C1 family.

It localises to the secreted. In terms of biological role, inhibitor of lipoprotein binding to the low density lipoprotein (LDL) receptor, LDL receptor-related protein, and very low density lipoprotein (VLDL) receptor. Associates with high density lipoproteins (HDL) and the triacylglycerol-rich lipoproteins in the plasma and makes up about 10% of the protein of the VLDL and 2% of that of HDL. Appears to interfere directly with fatty acid uptake and is also the major plasma inhibitor of cholesteryl ester transfer protein (CETP). Binds free fatty acids and reduces their intracellular esterification. Modulates the interaction of APOE with beta-migrating VLDL and inhibits binding of beta-VLDL to the LDL receptor-related protein. In Plecturocebus moloch (Dusky titi monkey), this protein is Apolipoprotein C-I (APOC1).